The chain runs to 78 residues: UPF0349 protein ABC2936 (78 aa).

Belongs to the UPF0349 family.

The sequence is that of UPF0349 protein ABC2936 from Shouchella clausii (strain KSM-K16) (Alkalihalobacillus clausii).